A 147-amino-acid chain; its full sequence is Large ribosomal subunit protein bL9 (147 aa).

The protein belongs to the bacterial ribosomal protein bL9 family.

In terms of biological role, binds to the 23S rRNA. The protein is Large ribosomal subunit protein bL9 of Thermodesulfovibrio yellowstonii (strain ATCC 51303 / DSM 11347 / YP87).